A 158-amino-acid chain; its full sequence is Complexin-3 (158 aa).

The interval 14–47 (KNLTGSLGGGEDKGDGDKSAAEAQGMSREEYEEY) is disordered. A compositionally biased stretch (basic and acidic residues) spans 23–33 (GEDKGDGDKSA). The stretch at 39-74 (MSREEYEEYQKQLVEEKMERDAQFTQRKAERATLRS) forms a coiled coil. Position 155 is a cysteine methyl ester (Cys155). Cys155 carries S-farnesyl cysteine lipidation. Positions 156-158 (HIM) are cleaved as a propeptide — removed in mature form.

Belongs to the complexin/synaphin family. As to quaternary structure, binds to the SNARE core complex containing SNAP25, VAMP2 and STX1A. In terms of processing, farnesylation mediates presynaptic targeting. In terms of tissue distribution, present in many brain regions, including hippocampus and cerebellum (at protein level). Expressed in the retina (at protein level). Expressed in retinal amacrine cells (at protein level). Expressed in retinal photoreceptor ribbon synapses. Expressed in the retinal inner nuclear layer, at bipolar cells (at protein level). Expressed in cone photoreceptor synaptic terminals (at protein level).

It is found in the synapse. The protein localises to the cell membrane. Complexin that regulates SNARE protein complex-mediated synaptic vesicle fusion. Required for the maintenance of synaptic ultrastructure in the adult retina. Positively regulates synaptic transmission through synaptic vesicle availability and exocytosis of neurotransmitters at photoreceptor ribbon synapses in the retina. Suppresses tonic photoreceptor activity and baseline 'noise' by suppression of Ca(2+) vesicle tonic release and the facilitation of evoked synchronous and asynchronous Ca(2+) vesicle release. The protein is Complexin-3 (Cplx3) of Mus musculus (Mouse).